Consider the following 333-residue polypeptide: Torsin-1A (333 aa).

The N-terminal stretch at 1–20 (MKLGRAALALLLLAPCVVRA) is a signal peptide. The segment at 92–252 (KPKKPLTLSL…VSVFNNKNSG (161 aa)) is interaction with SNAPIN. 103–110 (GWTGTGKN) contacts ATP. Residues Asn-144 and Asn-159 are each glycosylated (N-linked (GlcNAc...) asparagine). The interaction with KLC1 stretch occupies residues 252 to 333 (GFWHSSLIDR…FTKLDYYLDD (82 aa)). An interaction with SYNE3 region spans residues 313–333 (KVFSDKGCKTVFTKLDYYLDD).

It belongs to the ClpA/ClpB family. Torsin subfamily. Homohexamer. Interacts with TOR1B; the interaction may be specific of neural tissues. Interacts (ATP-bound) with TOR1AIP1 and TOR1AIP2; the interactions induce ATPase activity. Interacts with KLHL14; preferentially when ATP-free. Interacts with KLC1 (via TPR repeats); the interaction associates TOR1A with the kinesin oligomeric complex. Interacts with COPS4; the interaction associates TOR1A with the CSN complex. Interacts with SNAPIN; the interaction is direct and associates SNAPIN with the CSN complex. Interacts with STON2. Interacts (ATP-bound) with SYNE3 (via KASH domain); the interaction is required for SYNE3 nuclear envelope localization. Interacts with VIM; the interaction associates TOR1A with the cytoskeleton. Interacts with PLEC. Interacts (ATP-bound) with SLC6A3; regulates SLC6A3 transport to the plasma membrane. Post-translationally, N-glycosylated. Widely expressed (at protein level).

The protein resides in the endoplasmic reticulum lumen. It is found in the nucleus membrane. Its subcellular location is the cell projection. The protein localises to the growth cone. It localises to the cytoplasmic vesicle membrane. The protein resides in the synapse. It is found in the synaptosome. Its subcellular location is the cytoplasm. The protein localises to the cytoskeleton. It localises to the cytoplasmic vesicle. The protein resides in the secretory vesicle. It is found in the synaptic vesicle. The catalysed reaction is ATP + H2O = ADP + phosphate + H(+). Protein with chaperone functions important for the control of protein folding, processing, stability and localization as well as for the reduction of misfolded protein aggregates. Involved in the regulation of synaptic vesicle recycling, controls STON2 protein stability in collaboration with the COP9 signalosome complex (CSN). In the nucleus, may link the cytoskeleton with the nuclear envelope, this mechanism seems to be crucial for the control of nuclear polarity, cell movement and, specifically in neurons, nuclear envelope integrity. Participates in the cellular trafficking and may regulate the subcellular location of multipass membrane proteins such as the dopamine transporter SLC6A3, leading to the modulation of dopamine neurotransmission. In the endoplasmic reticulum, plays a role in the quality control of protein folding by increasing clearance of misfolded proteins such as SGCE variants or holding them in an intermediate state for proper refolding. May have a redundant function with TOR1B in non-neural tissues. The sequence is that of Torsin-1A (Tor1a) from Mus musculus (Mouse).